Consider the following 211-residue polypeptide: Redox-sensing transcriptional repressor Rex (211 aa).

The H-T-H motif DNA-binding region spans 17 to 56 (KYHRYLEELMKNEVDRISSKELGEKIGFTASQIRQDLNCF). An NAD(+)-binding site is contributed by 91-96 (GAGNIG).

Belongs to the transcriptional regulatory Rex family. As to quaternary structure, homodimer.

It localises to the cytoplasm. In terms of biological role, modulates transcription in response to changes in cellular NADH/NAD(+) redox state. In Clostridium beijerinckii (strain ATCC 51743 / NCIMB 8052) (Clostridium acetobutylicum), this protein is Redox-sensing transcriptional repressor Rex.